A 232-amino-acid polypeptide reads, in one-letter code: Sensory rhodopsin III (232 aa).

7 helical membrane passes run 5 to 25 (IVWY…FVWF), 39 to 59 (LPPI…LIAG), 73 to 93 (FADW…LAGV), 100 to 120 (LAVA…SMSG), 125 to 145 (IAFA…IKTF), 168 to 188 (VVTW…TGII), and 194 to 214 (NFLV…ILLV). K205 bears the N6-(retinylidene)lysine mark.

The protein belongs to the archaeal/bacterial/fungal opsin family. As to quaternary structure, interacts with HtrM. Post-translationally, the covalent binding of retinal to the apoprotein, bacterioopsin, generates bacteriorhodopsin.

It localises to the membrane. In terms of biological role, sensory rhodopsin. Associates with an unusual transducer lacking a methyl-accepting transducer domain found in all other photosensory transducers. The chromophore is all-trans-retinal in the dark. This chain is Sensory rhodopsin III (xop2), found in Haloarcula marismortui (strain ATCC 43049 / DSM 3752 / JCM 8966 / VKM B-1809) (Halobacterium marismortui).